A 634-amino-acid polypeptide reads, in one-letter code: 1-deoxy-D-xylulose-5-phosphate synthase (634 aa).

Thiamine diphosphate-binding positions include His-74 and 115–117 (AHS). Asp-146 serves as a coordination point for Mg(2+). Thiamine diphosphate-binding positions include 147-148 (GA), Asn-176, Tyr-283, and Glu-365. Asn-176 contacts Mg(2+).

This sequence belongs to the transketolase family. DXPS subfamily. As to quaternary structure, homodimer. Mg(2+) serves as cofactor. Requires thiamine diphosphate as cofactor.

It carries out the reaction D-glyceraldehyde 3-phosphate + pyruvate + H(+) = 1-deoxy-D-xylulose 5-phosphate + CO2. It functions in the pathway metabolic intermediate biosynthesis; 1-deoxy-D-xylulose 5-phosphate biosynthesis; 1-deoxy-D-xylulose 5-phosphate from D-glyceraldehyde 3-phosphate and pyruvate: step 1/1. In terms of biological role, catalyzes the acyloin condensation reaction between C atoms 2 and 3 of pyruvate and glyceraldehyde 3-phosphate to yield 1-deoxy-D-xylulose-5-phosphate (DXP). The protein is 1-deoxy-D-xylulose-5-phosphate synthase of Burkholderia cenocepacia (strain ATCC BAA-245 / DSM 16553 / LMG 16656 / NCTC 13227 / J2315 / CF5610) (Burkholderia cepacia (strain J2315)).